Consider the following 365-residue polypeptide: Tetratricopeptide repeat protein 19, mitochondrial (365 aa).

The N-terminal 52 residues, 1–52 (MFRLLRWRLGRTLLRAAGRRCGGCTARLLPERAGDAGPGAERLRTRGAPARG), are a transit peptide targeting the mitochondrion. TPR repeat units follow at residues 127–160 (TYTYDLMANLAFIRGQLENAEQLFKATMSYLLGG), 170–203 (VEISLKLANIYAAQNKQEFALAGYEFCISTLEGK), 220–260 (ANTY…CQEI), 269–302 (IVLMSDLATALDAQGHFDDAYIYMQRASDLAREI), and 308–341 (HMVLSNLAAILIHRERYTQAKEIYQEALKQAELK).

It belongs to the TTC19 family. In terms of assembly, binds to the mature mitochondrial complex III dimer, after the incorporation of the Rieske protein UQCRFS1. Interacts with UQCRC1 and UQCRFS1. Interacts with ZFYVE26 and CHMP4B. In terms of processing, proteolytically cleaved by PARL.

Its subcellular location is the mitochondrion inner membrane. Its function is as follows. Required for the preservation of the structural and functional integrity of mitochondrial respiratory complex III by allowing the physiological turnover of the Rieske protein UQCRFS1. Involved in the clearance of UQCRFS1 N-terminal fragments, which are produced upon incorporation into the complex III and whose presence is detrimental for its catalytic activity. This Rattus norvegicus (Rat) protein is Tetratricopeptide repeat protein 19, mitochondrial (Ttc19).